Here is a 391-residue protein sequence, read N- to C-terminus: Formate-dependent phosphoribosylglycinamide formyltransferase (391 aa).

N(1)-(5-phospho-beta-D-ribosyl)glycinamide contacts are provided by residues 20–21 (EL) and Glu-80. ATP-binding positions include Arg-112, Lys-153, 158–163 (SSGKGQ), 193–196 (EGFI), and Glu-201. In terms of domain architecture, ATP-grasp spans 117-306 (RLAAETLGLP…EFALHVRAIQ (190 aa)). The Mg(2+) site is built by Glu-265 and Glu-277. N(1)-(5-phospho-beta-D-ribosyl)glycinamide is bound by residues Asp-284, Lys-354, and 361–362 (RR).

This sequence belongs to the PurK/PurT family. As to quaternary structure, homodimer.

The enzyme catalyses N(1)-(5-phospho-beta-D-ribosyl)glycinamide + formate + ATP = N(2)-formyl-N(1)-(5-phospho-beta-D-ribosyl)glycinamide + ADP + phosphate + H(+). It participates in purine metabolism; IMP biosynthesis via de novo pathway; N(2)-formyl-N(1)-(5-phospho-D-ribosyl)glycinamide from N(1)-(5-phospho-D-ribosyl)glycinamide (formate route): step 1/1. Involved in the de novo purine biosynthesis. Catalyzes the transfer of formate to 5-phospho-ribosyl-glycinamide (GAR), producing 5-phospho-ribosyl-N-formylglycinamide (FGAR). Formate is provided by PurU via hydrolysis of 10-formyl-tetrahydrofolate. The chain is Formate-dependent phosphoribosylglycinamide formyltransferase from Shewanella baltica (strain OS185).